We begin with the raw amino-acid sequence, 375 residues long: Alcohol dehydrogenase 1A (375 aa).

Gly-1 is modified (N-acetylglycine). Zn(2+) contacts are provided by Cys-46, His-67, Cys-97, Cys-100, Cys-103, Cys-111, and Cys-174. NAD(+)-binding positions include 199-204 (GLGGVG), Asp-223, Lys-228, 293-295 (VGL), and Arg-370.

It belongs to the zinc-containing alcohol dehydrogenase family. Class-I subfamily. Multimeric (with different ratios of monomers). The cofactor is Zn(2+).

The protein localises to the cytoplasm. It carries out the reaction a primary alcohol + NAD(+) = an aldehyde + NADH + H(+). The catalysed reaction is a secondary alcohol + NAD(+) = a ketone + NADH + H(+). This is Alcohol dehydrogenase 1A from Saara hardwickii (Indian spiny-tailed lizard).